The sequence spans 595 residues: Aspartate--tRNA ligase (595 aa).

E173 contacts L-aspartate. The tract at residues 197–200 (QLFK) is aspartate. Residue R219 participates in L-aspartate binding. ATP is bound by residues 219 to 221 (RDE) and Q228. L-aspartate is bound at residue H449. E483 provides a ligand contact to ATP. R490 serves as a coordination point for L-aspartate. 535-538 (GLDR) is a binding site for ATP.

This sequence belongs to the class-II aminoacyl-tRNA synthetase family. Type 1 subfamily. As to quaternary structure, homodimer.

It is found in the cytoplasm. The catalysed reaction is tRNA(Asp) + L-aspartate + ATP = L-aspartyl-tRNA(Asp) + AMP + diphosphate. Its function is as follows. Catalyzes the attachment of L-aspartate to tRNA(Asp) in a two-step reaction: L-aspartate is first activated by ATP to form Asp-AMP and then transferred to the acceptor end of tRNA(Asp). This is Aspartate--tRNA ligase from Shewanella sediminis (strain HAW-EB3).